A 440-amino-acid polypeptide reads, in one-letter code: Thymidine phosphorylase (440 aa).

The protein belongs to the thymidine/pyrimidine-nucleoside phosphorylase family. As to quaternary structure, homodimer.

It carries out the reaction thymidine + phosphate = 2-deoxy-alpha-D-ribose 1-phosphate + thymine. The protein operates within pyrimidine metabolism; dTMP biosynthesis via salvage pathway; dTMP from thymine: step 1/2. In terms of biological role, the enzymes which catalyze the reversible phosphorolysis of pyrimidine nucleosides are involved in the degradation of these compounds and in their utilization as carbon and energy sources, or in the rescue of pyrimidine bases for nucleotide synthesis. This Salmonella arizonae (strain ATCC BAA-731 / CDC346-86 / RSK2980) protein is Thymidine phosphorylase.